We begin with the raw amino-acid sequence, 639 residues long: 1-deoxy-D-xylulose-5-phosphate synthase 1 (639 aa).

Thiamine diphosphate-binding positions include histidine 79 and 120–122; that span reads AHS. Aspartate 155 is a binding site for Mg(2+). Residues 156-157, asparagine 184, tyrosine 293, and glutamate 373 each bind thiamine diphosphate; that span reads GA. Asparagine 184 lines the Mg(2+) pocket.

Belongs to the transketolase family. DXPS subfamily. In terms of assembly, homodimer. It depends on Mg(2+) as a cofactor. The cofactor is thiamine diphosphate.

It catalyses the reaction D-glyceraldehyde 3-phosphate + pyruvate + H(+) = 1-deoxy-D-xylulose 5-phosphate + CO2. Its pathway is metabolic intermediate biosynthesis; 1-deoxy-D-xylulose 5-phosphate biosynthesis; 1-deoxy-D-xylulose 5-phosphate from D-glyceraldehyde 3-phosphate and pyruvate: step 1/1. Functionally, catalyzes the acyloin condensation reaction between C atoms 2 and 3 of pyruvate and glyceraldehyde 3-phosphate to yield 1-deoxy-D-xylulose-5-phosphate (DXP). The protein is 1-deoxy-D-xylulose-5-phosphate synthase 1 of Jannaschia sp. (strain CCS1).